Here is a 757-residue protein sequence, read N- to C-terminus: POU domain, class 2, transcription factor 1 (757 aa).

4 disordered regions span residues 1–43 (MKLH…QTNG), 271–295 (AATP…SLEE), 375–398 (SLSN…RRKK), and 532–574 (VSSV…TSPL). Polar residues-rich tracts occupy residues 19 to 43 (RMNN…QTNG) and 275 to 285 (VQQLPQSQTTP). Residues 294–368 (EEPSDLEELE…LLEKWLNDAE (75 aa)) form the POU-specific domain. The segment at residues 395–454 (RRKKRTSIETNIRVALEKSFLENQKPTSEEITMIADQLNMEKEVIRVWFCNRRQKEKRIN) is a DNA-binding region (homeobox).

Belongs to the POU transcription factor family. Class-2 subfamily.

The protein localises to the cytoplasm. Its subcellular location is the nucleus. Its function is as follows. Transcription factor that binds to the octamer motif (5'-ATTTGCAT-3') and activates the promoters of the genes for some small nuclear RNAs (snRNA) and histone H2B. Acts downstream of Notch signaling during radial glia formation. Regulates apoptosis, possibly via an FGF-signaling pathway. This is POU domain, class 2, transcription factor 1 from Xenopus tropicalis (Western clawed frog).